We begin with the raw amino-acid sequence, 276 residues long: Undecaprenyl-diphosphatase (276 aa).

The next 6 membrane-spanning stretches (helical) occupy residues 43–63 (RAMAFNIIIQLAAILAVVWEF), 85–105 (GNLLLAFMPAVVLGVLFADLI), 109–129 (LFNPITVATALVVGGVIMLWA), 183–203 (AATEFSFFLAMPTMVGAAVYS), 214–234 (ADLPVFAIGFVTSFIFAMIAV), and 249–269 (FAWYRIVFGLLILATWQFGWV).

It belongs to the UppP family.

The protein resides in the cell inner membrane. The catalysed reaction is di-trans,octa-cis-undecaprenyl diphosphate + H2O = di-trans,octa-cis-undecaprenyl phosphate + phosphate + H(+). In terms of biological role, catalyzes the dephosphorylation of undecaprenyl diphosphate (UPP). Confers resistance to bacitracin. This is Undecaprenyl-diphosphatase from Pseudomonas putida (strain GB-1).